Reading from the N-terminus, the 427-residue chain is Peptidase B (427 aa).

2 residues coordinate Mn(2+): Lys-195 and Asp-200. Lys-207 is a catalytic residue. 3 residues coordinate Mn(2+): Asp-218, Asp-277, and Glu-279. Arg-281 is a catalytic residue.

It belongs to the peptidase M17 family. In terms of assembly, homohexamer. Mn(2+) is required as a cofactor.

The protein localises to the cytoplasm. The enzyme catalyses Release of an N-terminal amino acid, Xaa, from a peptide or arylamide. Xaa is preferably Glu or Asp but may be other amino acids, including Leu, Met, His, Cys and Gln.. Probably plays an important role in intracellular peptide degradation. This Shigella dysenteriae serotype 1 (strain Sd197) protein is Peptidase B.